The chain runs to 600 residues: CDK5RAP1-like protein (600 aa).

The disordered stretch occupies residues 45–66; that stretch reads LSSAAHPPPPPPRRLARSGPSR. Residues 93–222 form the MTTase N-terminal domain; that stretch reads GRIYHETYGC…LPRLLQEVDY (130 aa). Cys102, Cys139, Cys185, Cys260, Cys264, and Cys267 together coordinate [4Fe-4S] cluster. Residues 246–501 form the Radical SAM core domain; it reads SDNSVTAFVS…ISTFRETTAK (256 aa). One can recognise a TRAM domain in the interval 504 to 580; sequence DSQVGTVQLV…TASLSGDVIA (77 aa).

Belongs to the methylthiotransferase family. MiaB subfamily. [4Fe-4S] cluster serves as cofactor.

Its function is as follows. Potential regulator of CDK5 activity. This is CDK5RAP1-like protein from Oryza sativa subsp. japonica (Rice).